An 823-amino-acid chain; its full sequence is Protein FAM83G (823 aa).

At Ala2 the chain carries N-acetylalanine. The tract at residues 2-312 is DUF1669; sequence AFSQVQCLDD…LYLMSHSVSL (311 aa). A Phosphoserine modification is found at Ser4. The interval 75 to 108 is disordered; it reads DPGSEDPRGTGPSQGPEDNGVGDGEEASGADGVP. Phosphoserine is present on residues Ser124, Ser127, and Ser356. Positions 450-823 are disordered; sequence RDTSQASAQH…AQAPRDRKDP (374 aa). Residues 452–465 show a composition bias toward polar residues; sequence TSQASAQHQLWKQS. A compositionally biased stretch (pro residues) spans 497-508; sequence DPEPLPPVPKPR. The segment covering 529–543 has biased composition (basic and acidic residues); that stretch reads LPKEEAPQNGTDHRL. Positions 578–587 are enriched in acidic residues; sequence GVEEEDDDDY. Phosphoserine occurs at positions 610, 614, 616, 650, and 666. 2 stretches are compositionally biased toward basic and acidic residues: residues 672-681 and 809-823; these read RGREEADALK and DSKR…RKDP.

It belongs to the FAM83 family. As to quaternary structure, interacts with SMAD1 (via MH2 domain); in a SMAD4-independent manner. Directly interacts (via DUF1669) with casein kinase isoforms CSNK1A1 and CSNK1A1L. In terms of processing, phosphorylated in vitro by CSNK1A1. Post-translationally, BMP signaling induces the phosphorylation by BMPR1A at Ser-610, Ser-614 and Ser-616. Phosphorylation at Ser-610 is necessary for the activation of SMAD4-independent BMP target genes such as NEDD9 and ASNS.

Its subcellular location is the cytoplasm. It localises to the cytosol. The protein localises to the nucleus. Substrate for type I BMP receptor kinase involved in regulation of some target genes of the BMP signaling pathway. Also regulates the expression of several non-BMP target genes, suggesting a role in other signaling pathways. This is Protein FAM83G (FAM83G) from Homo sapiens (Human).